Reading from the N-terminus, the 726-residue chain is Catalase-peroxidase (726 aa).

Residues 91 to 214 (WHAAGTYRIG…LAAVQMGLIY (124 aa)) constitute a cross-link (tryptophyl-tyrosyl-methioninium (Trp-Tyr) (with M-240)). Residue histidine 92 is the Proton acceptor of the active site. The segment at residues 214-240 (YVNPEGPNGNPDPVAAAIDIRETFRRM) is a cross-link (tryptophyl-tyrosyl-methioninium (Tyr-Met) (with W-91)). Position 255 (histidine 255) interacts with heme b. The interval 335–362 (AHQWKPKGNAGAGTVPDPADPSKRRSPS) is disordered.

Belongs to the peroxidase family. Peroxidase/catalase subfamily. As to quaternary structure, homodimer or homotetramer. It depends on heme b as a cofactor. In terms of processing, formation of the three residue Trp-Tyr-Met cross-link is important for the catalase, but not the peroxidase activity of the enzyme.

It carries out the reaction H2O2 + AH2 = A + 2 H2O. It catalyses the reaction 2 H2O2 = O2 + 2 H2O. In terms of biological role, bifunctional enzyme with both catalase and broad-spectrum peroxidase activity. The polypeptide is Catalase-peroxidase (Cupriavidus metallidurans (strain ATCC 43123 / DSM 2839 / NBRC 102507 / CH34) (Ralstonia metallidurans)).